The sequence spans 317 residues: L-lactate dehydrogenase (317 aa).

NAD(+) contacts are provided by residues V16, D37, R42, Y67, and 81–82 (GA). Q84 and R90 together coordinate substrate. NAD(+)-binding positions include S103, 120–122 (AAN), and S145. 122 to 125 (NPVD) is a binding site for substrate. Substrate is bound at residue 150–153 (DSAR). H177 functions as the Proton acceptor in the catalytic mechanism. Y221 bears the Phosphotyrosine mark. Substrate is bound at residue T230.

This sequence belongs to the LDH/MDH superfamily. LDH family. As to quaternary structure, homotetramer.

It is found in the cytoplasm. The catalysed reaction is (S)-lactate + NAD(+) = pyruvate + NADH + H(+). It participates in fermentation; pyruvate fermentation to lactate; (S)-lactate from pyruvate: step 1/1. In terms of biological role, catalyzes the conversion of lactate to pyruvate. This is L-lactate dehydrogenase from Limosilactobacillus fermentum (strain NBRC 3956 / LMG 18251) (Lactobacillus fermentum).